A 129-amino-acid polypeptide reads, in one-letter code: Virion-associated protein (129 aa).

2 coiled-coil regions span residues 1-31 (MANL…ILEL) and 38-59 (IKES…LIND). Residues 122–129 (PAGWPNQY) are capsid binding.

This sequence belongs to the caulimovirus ORF III family. As to quaternary structure, homotetramer, through coiled-coil domain. Homotrimer when interacts with icosehadral capsid. Interacts with capsid protein, and with Movement protein.

Its subcellular location is the virion. The protein localises to the host cell junction. It localises to the host plasmodesma. In terms of biological role, plays a role in virus cell-to-cell and plant-to-plant transmission. Interacts with virion icosahedral capsid and movement protein, thereby facilitating virion cell-to-cell transmission through plasmodesmata opened by viral movement protein. Also interacts with aphid transmission factor, attaching the virion to aphid stylet when the animal feeds on an virus infected plant. Aphid saliva may later detach the virion, inducing release of infectious particles when the animal feeds on a new plant. This Cauliflower mosaic virus (strain D/H) (CaMV) protein is Virion-associated protein.